The chain runs to 786 residues: Endonuclease MutS2 (786 aa).

334 to 341 lines the ATP pocket; that stretch reads GPNTGGKT. The Smr domain occupies 711-786; sequence LDLRGERYEN…GNGATVVYFK (76 aa).

This sequence belongs to the DNA mismatch repair MutS family. MutS2 subfamily. In terms of assembly, homodimer. Binds to stalled ribosomes, contacting rRNA.

Its function is as follows. Endonuclease that is involved in the suppression of homologous recombination and thus may have a key role in the control of bacterial genetic diversity. Functionally, acts as a ribosome collision sensor, splitting the ribosome into its 2 subunits. Detects stalled/collided 70S ribosomes which it binds and splits by an ATP-hydrolysis driven conformational change. Acts upstream of the ribosome quality control system (RQC), a ribosome-associated complex that mediates the extraction of incompletely synthesized nascent chains from stalled ribosomes and their subsequent degradation. Probably generates substrates for RQC. In Ligilactobacillus salivarius (strain UCC118) (Lactobacillus salivarius), this protein is Endonuclease MutS2.